The sequence spans 135 residues: Retinol-binding protein 1 (135 aa).

The segment at 22–32 (RALDVNVALRK) is important for interaction with STRA6. All-trans-retinol-binding residues include Lys41, Met63, and Gln109.

The protein belongs to the calycin superfamily. Fatty-acid binding protein (FABP) family. Interacts (only as retinol-free apoprotein) with STRA6.

It localises to the cytoplasm. The protein localises to the lipid droplet. In terms of biological role, cytoplasmic retinol-binding protein. Accepts retinol from the transport protein STRA6, and thereby contributes to retinol uptake, storage and retinoid homeostasis. This is Retinol-binding protein 1 (RBP1) from Bos taurus (Bovine).